The following is a 261-amino-acid chain: Carbonic anhydrase 1 (261 aa).

Residue A2 is modified to N-acetylalanine. The region spanning 4–261 (PDWGYDGENG…LNGRTVKASF (258 aa)) is the Alpha-carbonic anhydrase domain. Catalysis depends on H65, which acts as the Proton donor/acceptor. Zn(2+) is bound by residues H95, H97, and H120. Substrate is bound by residues T200 and 200-201 (TH).

The protein belongs to the alpha-carbonic anhydrase family. Zn(2+) serves as cofactor.

Its subcellular location is the cytoplasm. It carries out the reaction hydrogencarbonate + H(+) = CO2 + H2O. It catalyses the reaction urea = cyanamide + H2O. Its activity is regulated as follows. Inhibited by acetazolamide. Functionally, catalyzes the reversible hydration of carbon dioxide. Can hydrate cyanamide to urea. The sequence is that of Carbonic anhydrase 1 (CA1) from Bos taurus (Bovine).